Consider the following 435-residue polypeptide: Gamma-glutamyl phosphate reductase (435 aa).

The protein belongs to the gamma-glutamyl phosphate reductase family.

The protein resides in the cytoplasm. It catalyses the reaction L-glutamate 5-semialdehyde + phosphate + NADP(+) = L-glutamyl 5-phosphate + NADPH + H(+). It participates in amino-acid biosynthesis; L-proline biosynthesis; L-glutamate 5-semialdehyde from L-glutamate: step 2/2. In terms of biological role, catalyzes the NADPH-dependent reduction of L-glutamate 5-phosphate into L-glutamate 5-semialdehyde and phosphate. The product spontaneously undergoes cyclization to form 1-pyrroline-5-carboxylate. This Synechococcus sp. (strain CC9605) protein is Gamma-glutamyl phosphate reductase.